Consider the following 165-residue polypeptide: 3-isopropylmalate dehydratase small subunit (165 aa).

Belongs to the LeuD family. LeuD type 2 subfamily. Heterodimer of LeuC and LeuD.

The catalysed reaction is (2R,3S)-3-isopropylmalate = (2S)-2-isopropylmalate. The protein operates within amino-acid biosynthesis; L-leucine biosynthesis; L-leucine from 3-methyl-2-oxobutanoate: step 2/4. Functionally, catalyzes the isomerization between 2-isopropylmalate and 3-isopropylmalate, via the formation of 2-isopropylmaleate. In Lachnoclostridium phytofermentans (strain ATCC 700394 / DSM 18823 / ISDg) (Clostridium phytofermentans), this protein is 3-isopropylmalate dehydratase small subunit.